The primary structure comprises 427 residues: Thymidine phosphorylase (427 aa).

It belongs to the thymidine/pyrimidine-nucleoside phosphorylase family. In terms of assembly, homodimer.

The catalysed reaction is thymidine + phosphate = 2-deoxy-alpha-D-ribose 1-phosphate + thymine. In terms of biological role, the enzymes which catalyze the reversible phosphorolysis of pyrimidine nucleosides are involved in the degradation of these compounds and in their utilization as carbon and energy sources, or in the rescue of pyrimidine bases for nucleotide synthesis. This Mycobacterium tuberculosis (strain CDC 1551 / Oshkosh) protein is Thymidine phosphorylase (deoA).